A 477-amino-acid chain; its full sequence is Ribulose bisphosphate carboxylase large chain (477 aa).

The propeptide occupies 1–2; that stretch reads MS. Residue proline 3 is modified to N-acetylproline. The residue at position 14 (lysine 14) is an N6,N6,N6-trimethyllysine. Substrate contacts are provided by asparagine 123 and threonine 173. The Proton acceptor role is filled by lysine 175. A substrate-binding site is contributed by lysine 177. Lysine 201, aspartate 203, and glutamate 204 together coordinate Mg(2+). At lysine 201 the chain carries N6-carboxylysine. The Proton acceptor role is filled by histidine 294. The substrate site is built by arginine 295, histidine 327, and serine 379.

The protein belongs to the RuBisCO large chain family. Type I subfamily. Heterohexadecamer of 8 large chains and 8 small chains; disulfide-linked. The disulfide link is formed within the large subunit homodimers. The cofactor is Mg(2+). In terms of processing, the disulfide bond which can form in the large chain dimeric partners within the hexadecamer appears to be associated with oxidative stress and protein turnover.

It localises to the plastid. The protein resides in the chloroplast. The enzyme catalyses 2 (2R)-3-phosphoglycerate + 2 H(+) = D-ribulose 1,5-bisphosphate + CO2 + H2O. The catalysed reaction is D-ribulose 1,5-bisphosphate + O2 = 2-phosphoglycolate + (2R)-3-phosphoglycerate + 2 H(+). Its function is as follows. RuBisCO catalyzes two reactions: the carboxylation of D-ribulose 1,5-bisphosphate, the primary event in carbon dioxide fixation, as well as the oxidative fragmentation of the pentose substrate in the photorespiration process. Both reactions occur simultaneously and in competition at the same active site. The polypeptide is Ribulose bisphosphate carboxylase large chain (Cichorium intybus (Chicory)).